A 435-amino-acid chain; its full sequence is Salicylate hydroxylase (435 aa).

12-41 (RVAIVGGGISGLALALSLCKHSHLNVQLFE) contacts FAD.

FAD serves as cofactor.

It catalyses the reaction salicylate + NADH + O2 + 2 H(+) = catechol + CO2 + NAD(+) + H2O. The protein operates within aromatic compound metabolism; naphthalene degradation. In Pseudomonas putida (Arthrobacter siderocapsulatus), this protein is Salicylate hydroxylase (nahG).